Consider the following 377-residue polypeptide: Signal peptide peptidase (377 aa).

Positions 1–27 (MDSALSDPHNGSAEAGGPTNSTTRPPS) are disordered. Topologically, residues 1–31 (MDSALSDPHNGSAEAGGPTNSTTRPPSTPEG) are lumenal. Asparagine 10 and asparagine 20 each carry an N-linked (GlcNAc...) asparagine glycan. Residues 32–52 (IALAYGSLLLMALLPIFFGAL) form a helical membrane-spanning segment. Over 53 to 77 (RSVRCARGKNASDMPETITSRDAAR) the chain is Cytoplasmic. Residues 78 to 98 (FPIIASCTLLGLYLFFKIFSQ) traverse the membrane as a helical segment. The Lumenal portion of the chain corresponds to 99–100 (EY). A helical membrane pass occupies residues 101–121 (INLLLSMYFFVLGILALSHTI). The Cytoplasmic portion of the chain corresponds to 122–157 (SPFMNKFFPASFPNRQYQLLFTQGSGENKEEIINYE). The helical transmembrane segment at 158–178 (FDTKDLVCLGLSSIVGVWYLL) threads the bilayer. Residues 179–181 (RKH) are Lumenal-facing. A helical transmembrane segment spans residues 182–202 (WIANNLFGLAFSLNGVELLHL). Residues 203–209 (NNVSTGC) lie on the Cytoplasmic side of the membrane. Residues 210 to 230 (ILLGGLFIYDVFWVFGTNVMV) traverse the membrane as a helical segment. Aspartate 219 is a catalytic residue. Residues 231 to 256 (TVAKSFEAPIKLVFPQDLLEKGLEAN) lie on the Lumenal side of the membrane. The chain crosses the membrane as a helical span at residues 257-277 (NFAMLGLGDVVIPGIFIALLL). Aspartate 265 is an active-site residue. Over 278-290 (RFDISLKKNTHTY) the chain is Cytoplasmic. Residues 291-311 (FYTSFAAYIFGLGLTIFIMHI) traverse the membrane as a helical segment. The Lumenal segment spans residues 312–314 (FKH). Residues 315 to 335 (AQPALLYLVPACIGFPVLVAL) form a helical membrane-spanning segment. The PAL motif lies at 317 to 319 (PAL). Residues 336–377 (AKGEVTEMFSYEESNPKDPAAVTESKEGTEASASKGLEKKEK) lie on the Cytoplasmic side of the membrane. The segment at 345–377 (SYEESNPKDPAAVTESKEGTEASASKGLEKKEK) is disordered. At serine 367 the chain carries Phosphoserine.

Belongs to the peptidase A22B family. In terms of assembly, monomer. Homodimer. Interacts with RNF139. Interacts with DERL1 and XBP1 isoform 1. N-glycosylated. In terms of tissue distribution, widely expressed with highest levels in kidney, liver, placenta, lung, leukocytes and small intestine and reduced expression in heart and skeletal muscle. Expressed abundantly in the CNS with highest levels in thalamus and medulla.

It is found in the endoplasmic reticulum membrane. The protein resides in the membrane. Its subcellular location is the cell membrane. Its function is as follows. Catalyzes intramembrane proteolysis of signal peptides that have been removed from precursors of secretory and membrane proteins, resulting in the release of the fragment from the ER membrane into the cytoplasm. Required to generate lymphocyte cell surface (HLA-E) epitopes derived from MHC class I signal peptides. May be necessary for the removal of the signal peptide that remains attached to the hepatitis C virus core protein after the initial proteolytic processing of the polyprotein. Involved in the intramembrane cleavage of the integral membrane protein PSEN1. Cleaves the integral membrane protein XBP1 isoform 1 in a DERL1/RNF139-dependent manner. May play a role in graft rejection. This is Signal peptide peptidase from Homo sapiens (Human).